An 883-amino-acid chain; its full sequence is Glutamate receptor 2 (883 aa).

Positions 1 to 24 are cleaved as a signal peptide; that stretch reads MQKIMHISVLLSPVLWGLIFGVSS. Residues 25–543 are Extracellular-facing; sequence NSIQIGGLFP…GVFSFLDPLA (519 aa). Residues cysteine 78 and cysteine 330 are joined by a disulfide bond. N-linked (GlcNAc...) asparagine glycans are attached at residues asparagine 256, asparagine 370, asparagine 406, and asparagine 413. L-glutamate is bound by residues proline 499, threonine 501, and arginine 506. Residues 544-564 traverse the membrane as a helical segment; it reads YEIWMCIVFAYIGVSVVLFLV. Residues 565-591 lie on the Cytoplasmic side of the membrane; it reads SRFSPYEWHTEEFEDGRETQSSESTNE. Positions 592–607 form an intramembrane region, helical; Pore-forming; that stretch reads FGIFNSLWFSLGAFMQ. Residues 608–610 lie within the membrane without spanning it; the sequence is QGC. Cysteine 610 carries the S-palmitoyl cysteine lipid modification. The Cytoplasmic portion of the chain corresponds to 611 to 616; that stretch reads DISPRS. A helical membrane pass occupies residues 617-637; the sequence is LSGRIVGGVWWFFTLIIISSY. The Extracellular segment spans residues 638 to 812; sequence TANLAAFLTV…EKTSALSLSN (175 aa). L-glutamate contacts are provided by serine 675 and threonine 676. A Phosphoserine; by PKC modification is found at serine 683. Phosphoserine; by PKG is present on serine 717. Glutamate 726 contributes to the L-glutamate binding site. Cysteine 739 and cysteine 794 are joined by a disulfide. Residues 813-833 traverse the membrane as a helical segment; that stretch reads VAGVFYILVGGLGLAMLVALI. The Cytoplasmic segment spans residues 834-883; the sequence is EFCYKSRAEAKRMKVAKNAQNINPSSSQNSQNFATYKEGYNVYGIESVKI. Cysteine 836 carries S-palmitoyl cysteine lipidation. Serine 860 and serine 863 each carry phosphoserine. Residues 867-877 form a required for interaction with IQSEC1 region; sequence ATYKEGYNVYG. Residue tyrosine 876 is modified to Phosphotyrosine. Position 880 is a phosphoserine (serine 880).

Belongs to the glutamate-gated ion channel (TC 1.A.10.1) family. GRIA2 subfamily. Homotetramer or heterotetramer of pore-forming glutamate receptor subunits. Tetramers may be formed by the dimerization of dimers. May interact with MPP4. Forms a ternary complex with GRIP1 and CSPG4. Interacts with ATAD1 in an ATP-dependent manner. ATAD1-catalyzed ATP hydrolysis disrupts binding to ATAD1 and to GRIP1 and leads to AMPAR complex disassembly. Interacts with GRIP1 and GRIP2. Interacts with NSF via its C-terminus. Isoform 1, but not isoform 3, interacts with PICK1. Interacts with CACNG2. Interacts with GRIA1 and SYNDIG1. Part of a complex containing GRIA2, NSF and NAPA and/or NAPB. Interacts with SNX27 (via PDZ domain); the interaction is required for recycling to the plasma membrane when endocytosed and prevent degradation in lysosomes. Interacts with LRFN1. Found in a complex with GRIA1, GRIA3, GRIA4, CNIH2, CNIH3, CACNG2, CACNG3, CACNG4, CACNG5, CACNG7 and CACNG8. Interacts with CACNG5. Interacts with OLFM2. Interacts with AP4B1, AP4E1 and AP4M1; probably indirect it mediates the somatodendritic localization of GRIA2 in neurons. Forms a complex with GRIP1, NSG1 and STX12; controls the intracellular fate of AMPAR and the endosomal sorting of the GRIA2 subunit toward recycling and membrane targeting. Interacts with IQSEC1; the interaction is required for ARF6 activation. Interacts (heterotetramer form) with CNIH2 and CNIH3; this interaction promotes expression at the plasma membrane and extensively modulates their gating properties by slowing deactivation and desensitization kinetics. In terms of processing, palmitoylated. Depalmitoylated upon L-glutamate stimulation. Cys-610 palmitoylation leads to Golgi retention and decreased cell surface expression. In contrast, Cys-836 palmitoylation does not affect cell surface expression but regulates stimulation-dependent endocytosis. Ubiquitinated by RNF167, leading to its degradation. Post-translationally, phosphorylation at Tyr-876 is required for interaction with IQSEC1 and ARF6 activation, which in turn triggers AMPAR internalization for persistent synaptic depression. In terms of processing, N-glycosylated.

It is found in the cell membrane. Its subcellular location is the postsynaptic cell membrane. The protein localises to the postsynaptic density membrane. It catalyses the reaction Ca(2+)(in) = Ca(2+)(out). The catalysed reaction is Na(+)(in) = Na(+)(out). Ionotropic glutamate receptor that functions as a ligand-gated cation channel, gated by L-glutamate and glutamatergic agonists such as alpha-amino-3-hydroxy-5-methyl-4-isoxazolepropionic acid (AMPA), quisqualic acid, and kainic acid. L-glutamate acts as an excitatory neurotransmitter at many synapses in the central nervous system and plays an important role in fast excitatory synaptic transmission. Binding of the excitatory neurotransmitter L-glutamate induces a conformation change, leading to the opening of the cation channel, and thereby converts the chemical signal to an electrical impulse upon entry of monovalent and divalent cations such as sodium and calcium. The receptor then desensitizes rapidly and enters in a transient inactive state, characterized by the presence of bound agonist. In the presence of CACNG4 or CACNG7 or CACNG8, shows resensitization which is characterized by a delayed accumulation of current flux upon continued application of L-glutamate. Through complex formation with NSG1, GRIP1 and STX12 controls the intracellular fate of AMPAR and the endosomal sorting of the GRIA2 subunit toward recycling and membrane targeting. This is Glutamate receptor 2 from Homo sapiens (Human).